The chain runs to 316 residues: 4-diphosphocytidyl-2-C-methyl-D-erythritol kinase (316 aa).

Lys-32 is a catalytic residue. Position 126-136 (126-136 (PVGAGLGGGSA)) interacts with ATP. Residue Asp-168 is part of the active site.

This sequence belongs to the GHMP kinase family. IspE subfamily.

It carries out the reaction 4-CDP-2-C-methyl-D-erythritol + ATP = 4-CDP-2-C-methyl-D-erythritol 2-phosphate + ADP + H(+). Its pathway is isoprenoid biosynthesis; isopentenyl diphosphate biosynthesis via DXP pathway; isopentenyl diphosphate from 1-deoxy-D-xylulose 5-phosphate: step 3/6. Catalyzes the phosphorylation of the position 2 hydroxy group of 4-diphosphocytidyl-2C-methyl-D-erythritol. This chain is 4-diphosphocytidyl-2-C-methyl-D-erythritol kinase, found in Bifidobacterium longum (strain NCC 2705).